The sequence spans 468 residues: Putative ankyrin repeat protein R580 (468 aa).

ANK repeat units follow at residues 12–41 (DYFD…TLID), 189–218 (VINK…EINC), 249–278 (CHFD…KINS), 336–365 (SFDN…NINF), 367–393 (NMPT…DLEI), and 394–423 (HGTL…KFSL).

This chain is Putative ankyrin repeat protein R580, found in Acanthamoeba polyphaga (Amoeba).